The following is a 69-amino-acid chain: Cold shock-like protein CspC (69 aa).

The CSD domain maps to 6–66; the sequence is GQVKWFNESK…GQKGPAAVNV (61 aa).

The protein resides in the cytoplasm. The chain is Cold shock-like protein CspC (cspC) from Shigella flexneri.